A 118-amino-acid chain; its full sequence is Vesicle-associated membrane protein 1 (118 aa).

A compositionally biased stretch (low complexity) spans 1–15 (MSAPAQPPAEGTEGA). The segment at 1–38 (MSAPAQPPAEGTEGAAPGGGPPGPPPNTTSNRRLQQTQ) is disordered. Over 1–96 (MSAPAQPPAE…KRKYWWKNCK (96 aa)) the chain is Cytoplasmic. The span at 28 to 38 (TTSNRRLQQTQ) shows a compositional bias: polar residues. A v-SNARE coiled-coil homology domain is found at 33 to 93 (RLQQTQAQVE…AKLKRKYWWK (61 aa)). Ser-63 carries the post-translational modification Phosphoserine. A helical; Anchor for type IV membrane protein transmembrane segment spans residues 97–116 (MMIMLGAICAIIVVVIVIYI). The Vesicular portion of the chain corresponds to 117 to 118 (FT).

Belongs to the synaptobrevin family. Interacts with VAPA and VAPB. (Microbial infection) Targeted and hydrolyzed by C.botulinum neurotoxin type D (BoNT/D, botD) which hydrolyzes the 61-Lys-|-Leu-62 bond and inhibits neurotransmitter release. This is a poor substrate for BoNT/D, high concentrations are required to cleave it in vitro. In terms of processing, (Microbial infection) Targeted and hydrolyzed by C.botulinum neurotoxin type F (BoNT/F, botF) which hydrolyzes the 60-Gln-|-Lys-61 bond and inhibits neurotransmitter release. Expressed in brain and spleen (at protein level). Isoform 1 expressed at very high level in brain. Even higher level found in spinal cord. Isoform 3 expressed in kidney, spleen and liver. Isoforms 2 and 3 expressed in osteoblasts of trabecular bone. Also expressed in heart.

The protein localises to the cytoplasmic vesicle. It localises to the secretory vesicle. The protein resides in the synaptic vesicle membrane. It is found in the synapse. Its subcellular location is the synaptosome. The protein localises to the cytoplasmic vesicle membrane. It localises to the mitochondrion outer membrane. Involved in the targeting and/or fusion of transport vesicles to their target membrane. The polypeptide is Vesicle-associated membrane protein 1 (Vamp1) (Rattus norvegicus (Rat)).